A 469-amino-acid polypeptide reads, in one-letter code: A-type ATP synthase subunit B 3 (469 aa).

This sequence belongs to the ATPase alpha/beta chains family. In terms of assembly, has multiple subunits with at least A(3), B(3), C, D, E, F, H, I and proteolipid K(x).

The protein resides in the cell membrane. Component of the A-type ATP synthase that produces ATP from ADP in the presence of a proton gradient across the membrane. The B chain is a regulatory subunit. In Methanospirillum hungatei JF-1 (strain ATCC 27890 / DSM 864 / NBRC 100397 / JF-1), this protein is A-type ATP synthase subunit B 3.